A 737-amino-acid chain; its full sequence is Translation initiation factor IF-2 (737 aa).

Basic and acidic residues predominate over residues 69 to 80 (EKKEEKPIRKIM). The interval 69-130 (EKKEEKPIRK…HKNKGKKKKG (62 aa)) is disordered. Composition is skewed to basic residues over residues 95 to 108 (NNKKAKFQQTKNKK) and 121 to 130 (HKNKGKKKKG). The 168-residue stretch at 237 to 404 (ERPPVITIMG…TILITAEILE (168 aa)) folds into the tr-type G domain. The interval 246-253 (GHVDHGKT) is G1. Residue 246 to 253 (GHVDHGKT) participates in GTP binding. Positions 271 to 275 (GITQK) are G2. A G3 region spans residues 292 to 295 (DTPG). GTP is bound by residues 292–296 (DTPGH) and 346–349 (NKID). Residues 346–349 (NKID) are G4. The interval 382 to 384 (SAK) is G5.

This sequence belongs to the TRAFAC class translation factor GTPase superfamily. Classic translation factor GTPase family. IF-2 subfamily.

It localises to the cytoplasm. Functionally, one of the essential components for the initiation of protein synthesis. Protects formylmethionyl-tRNA from spontaneous hydrolysis and promotes its binding to the 30S ribosomal subunits. Also involved in the hydrolysis of GTP during the formation of the 70S ribosomal complex. This is Translation initiation factor IF-2 from Fusobacterium nucleatum subsp. nucleatum (strain ATCC 25586 / DSM 15643 / BCRC 10681 / CIP 101130 / JCM 8532 / KCTC 2640 / LMG 13131 / VPI 4355).